The sequence spans 152 residues: Plant UBX domain-containing protein 12 (152 aa).

A disordered region spans residues 32–61 (KRFSEEESEETENTTNSSNAVFGFPNLPEE). One can recognise a UBX domain in the interval 67–150 (DQSVLCRICV…GLANSLVSVT (84 aa)).

This is Plant UBX domain-containing protein 12 from Arabidopsis thaliana (Mouse-ear cress).